We begin with the raw amino-acid sequence, 327 residues long: N-acetyl-gamma-glutamyl-phosphate reductase (327 aa).

Residue C136 is part of the active site.

The protein belongs to the NAGSA dehydrogenase family. Type 1 subfamily.

Its subcellular location is the cytoplasm. The catalysed reaction is N-acetyl-L-glutamate 5-semialdehyde + phosphate + NADP(+) = N-acetyl-L-glutamyl 5-phosphate + NADPH + H(+). It participates in amino-acid biosynthesis; L-arginine biosynthesis; N(2)-acetyl-L-ornithine from L-glutamate: step 3/4. Its function is as follows. Catalyzes the NADPH-dependent reduction of N-acetyl-5-glutamyl phosphate to yield N-acetyl-L-glutamate 5-semialdehyde. The sequence is that of N-acetyl-gamma-glutamyl-phosphate reductase from Xylella fastidiosa (strain M23).